The chain runs to 162 residues: Large ribosomal subunit protein uL10 (162 aa).

This sequence belongs to the universal ribosomal protein uL10 family. Part of the ribosomal stalk of the 50S ribosomal subunit. The N-terminus interacts with L11 and the large rRNA to form the base of the stalk. The C-terminus forms an elongated spine to which L12 dimers bind in a sequential fashion forming a multimeric L10(L12)X complex.

Forms part of the ribosomal stalk, playing a central role in the interaction of the ribosome with GTP-bound translation factors. This chain is Large ribosomal subunit protein uL10, found in Borreliella afzelii (strain PKo) (Borrelia afzelii).